We begin with the raw amino-acid sequence, 764 residues long: Acylamino-acid-releasing enzyme (764 aa).

Active-site charge relay system residues include Ser-618, Asp-707, and His-739.

It belongs to the peptidase S9C family. As to quaternary structure, homotetramer.

The protein resides in the cytoplasm. The protein localises to the nucleus. The enzyme catalyses Cleavage of an N-acetyl or N-formyl amino acid from the N-terminus of a polypeptide.. With respect to regulation, strongly inhibited by the serine protease inhibitor diisopropyl fluorophosphate. Functionally, catalyzes the hydrolysis of the N-terminal peptide bond of an N-acetylated peptide to generate an N-acetylated amino acid and a peptide with a free N-terminus. Can degrade the glycated RuBisCO (ribulose-1,5-bisphosphate carboxylase/oxygenase) protein but not the native protein. May be involved in the elimination of glycated proteins. Plays a homeostatic role in sustaining the cytoplasmic antioxidative system. May contribute to the elimination of the oxidized proteins in the cytoplasm. The polypeptide is Acylamino-acid-releasing enzyme (Arabidopsis thaliana (Mouse-ear cress)).